Here is a 62-residue protein sequence, read N- to C-terminus: Conotoxin Pn-B02 (62 aa).

Residues 1 to 19 form the signal peptide; it reads MRCLPVFIILLLLIASAPS. The propeptide occupies 20 to 49; sequence FDALPKTEDNVPLSSFHDNLKRTRRIHLNI. Ala-61 is modified (alanine amide).

This sequence belongs to the conotoxin T superfamily. Contains 2 disulfide bonds that can be either 'C1-C3, C2-C4' or 'C1-C4, C2-C3', since these disulfide connectivities have been observed for conotoxins with cysteine framework V (for examples, see AC P0DQQ7 and AC P81755). In terms of tissue distribution, expressed by the venom duct.

It localises to the secreted. The polypeptide is Conotoxin Pn-B02 (Conus pennaceus (Feathered cone)).